We begin with the raw amino-acid sequence, 114 residues long: T cell receptor beta variable 3-1 (114 aa).

An N-terminal signal peptide occupies residues 1–21; that stretch reads MGCRLLCCVVFCLLQAGPLDT. The 93-residue stretch at 22 to 114 folds into the Ig-like domain; it reads AVSQTPKYLV…SAVYFCASSQ (93 aa). Cys42 and Cys110 are disulfide-bonded. Asn76 is a glycosylation site (N-linked (GlcNAc...) asparagine).

Alpha-beta TR is a heterodimer composed of an alpha and beta chain; disulfide-linked. The alpha-beta TR is associated with the transmembrane signaling CD3 coreceptor proteins to form the TR-CD3 (TcR or TCR). The assembly of alpha-beta TR heterodimers with CD3 occurs in the endoplasmic reticulum where a single alpha-beta TR heterodimer associates with one CD3D-CD3E heterodimer, one CD3G-CD3E heterodimer and one CD247 homodimer forming a stable octameric structure. CD3D-CD3E and CD3G-CD3E heterodimers preferentially associate with TR alpha and TR beta chains, respectively. The association of the CD247 homodimer is the last step of TcR assembly in the endoplasmic reticulum and is required for transport to the cell surface.

The protein localises to the cell membrane. In terms of biological role, v region of the variable domain of T cell receptor (TR) beta chain that participates in the antigen recognition. Alpha-beta T cell receptors are antigen specific receptors which are essential to the immune response and are present on the cell surface of T lymphocytes. Recognize peptide-major histocompatibility (MH) (pMH) complexes that are displayed by antigen presenting cells (APC), a prerequisite for efficient T cell adaptive immunity against pathogens. Binding of alpha-beta TR to pMH complex initiates TR-CD3 clustering on the cell surface and intracellular activation of LCK that phosphorylates the ITAM motifs of CD3G, CD3D, CD3E and CD247 enabling the recruitment of ZAP70. In turn ZAP70 phosphorylates LAT, which recruits numerous signaling molecules to form the LAT signalosome. The LAT signalosome propagates signal branching to three major signaling pathways, the calcium, the mitogen-activated protein kinase (MAPK) kinase and the nuclear factor NF-kappa-B (NF-kB) pathways, leading to the mobilization of transcription factors that are critical for gene expression and essential for T cell growth and differentiation. The T cell repertoire is generated in the thymus, by V-(D)-J rearrangement. This repertoire is then shaped by intrathymic selection events to generate a peripheral T cell pool of self-MH restricted, non-autoaggressive T cells. Post-thymic interaction of alpha-beta TR with the pMH complexes shapes TR structural and functional avidity. This is T cell receptor beta variable 3-1 from Homo sapiens (Human).